The sequence spans 327 residues: Pyruvate dehydrogenase E1 component subunit beta (327 aa).

A thiamine diphosphate-binding site is contributed by glutamate 63.

Heterodimer of an alpha and a beta chain. The cofactor is thiamine diphosphate.

It catalyses the reaction N(6)-[(R)-lipoyl]-L-lysyl-[protein] + pyruvate + H(+) = N(6)-[(R)-S(8)-acetyldihydrolipoyl]-L-lysyl-[protein] + CO2. In terms of biological role, the pyruvate dehydrogenase complex catalyzes the overall conversion of pyruvate to acetyl-CoA and CO(2). It contains multiple copies of three enzymatic components: pyruvate dehydrogenase (E1), dihydrolipoamide acetyltransferase (E2) and lipoamide dehydrogenase (E3). This chain is Pyruvate dehydrogenase E1 component subunit beta (pdhB), found in Mycoplasma pneumoniae (strain ATCC 29342 / M129 / Subtype 1) (Mycoplasmoides pneumoniae).